The chain runs to 280 residues: NAD kinase (280 aa).

Catalysis depends on D60, which acts as the Proton acceptor. NAD(+) is bound by residues 60 to 61 (DG), 134 to 135 (ND), R145, D164, 175 to 180 (TAYSLS), and Q234.

This sequence belongs to the NAD kinase family. It depends on a divalent metal cation as a cofactor.

It localises to the cytoplasm. The catalysed reaction is NAD(+) + ATP = ADP + NADP(+) + H(+). In terms of biological role, involved in the regulation of the intracellular balance of NAD and NADP, and is a key enzyme in the biosynthesis of NADP. Catalyzes specifically the phosphorylation on 2'-hydroxyl of the adenosine moiety of NAD to yield NADP. In Carboxydothermus hydrogenoformans (strain ATCC BAA-161 / DSM 6008 / Z-2901), this protein is NAD kinase.